The sequence spans 328 residues: Methionyl-tRNA formyltransferase (328 aa).

Residue 110–113 coordinates (6S)-5,6,7,8-tetrahydrofolate; the sequence is SLLP.

The protein belongs to the Fmt family.

It catalyses the reaction L-methionyl-tRNA(fMet) + (6R)-10-formyltetrahydrofolate = N-formyl-L-methionyl-tRNA(fMet) + (6S)-5,6,7,8-tetrahydrofolate + H(+). Attaches a formyl group to the free amino group of methionyl-tRNA(fMet). The formyl group appears to play a dual role in the initiator identity of N-formylmethionyl-tRNA by promoting its recognition by IF2 and preventing the misappropriation of this tRNA by the elongation apparatus. This chain is Methionyl-tRNA formyltransferase, found in Prochlorococcus marinus (strain MIT 9515).